A 211-amino-acid polypeptide reads, in one-letter code: Large ribosomal subunit protein eL13 (211 aa).

The protein belongs to the eukaryotic ribosomal protein eL13 family. In terms of assembly, component of the 60S large ribosomal subunit (LSU).

The protein localises to the cytoplasm. Functionally, component of the ribosome, a large ribonucleoprotein complex responsible for the synthesis of proteins in the cell. The small ribosomal subunit (SSU) binds messenger RNAs (mRNAs) and translates the encoded message by selecting cognate aminoacyl-transfer RNA (tRNA) molecules. The large subunit (LSU) contains the ribosomal catalytic site termed the peptidyl transferase center (PTC), which catalyzes the formation of peptide bonds, thereby polymerizing the amino acids delivered by tRNAs into a polypeptide chain. The nascent polypeptides leave the ribosome through a tunnel in the LSU and interact with protein factors that function in enzymatic processing, targeting, and the membrane insertion of nascent chains at the exit of the ribosomal tunnel. As part of the LSU, it is probably required for its formation and the maturation of rRNAs. In Gallus gallus (Chicken), this protein is Large ribosomal subunit protein eL13 (RPL13).